The following is a 783-amino-acid chain: E3 UFM1-protein ligase 1 homolog (783 aa).

Positions 406 to 476 are disordered; it reads TLGTTHDADE…DAVQQSANSS (71 aa). The span at 446 to 457 shows a compositional bias: basic residues; it reads KSTKKHQRGRAA.

This sequence belongs to the UFL1 family.

Functionally, E3 UFM1-protein ligase that mediates ufmylation of target proteins. This chain is E3 UFM1-protein ligase 1 homolog, found in Drosophila grimshawi (Hawaiian fruit fly).